The chain runs to 110 residues: uncharacterized protein (110 aa).

Transmembrane regions (helical) follow at residues 4 to 26 (LVGG…KSIN), 46 to 68 (ANRY…GLLL), and 72 to 91 (LFIL…FMLT).

Its subcellular location is the cell membrane. This is an uncharacterized protein from Bacillus subtilis (strain 168).